The following is a 434-amino-acid chain: Enolase (434 aa).

Position 163 (Gln-163) interacts with (2R)-2-phosphoglycerate. The active-site Proton donor is Glu-205. Positions 242, 291, and 318 each coordinate Mg(2+). Lys-343, Arg-372, Ser-373, and Lys-394 together coordinate (2R)-2-phosphoglycerate. Lys-343 functions as the Proton acceptor in the catalytic mechanism.

The protein belongs to the enolase family. Mg(2+) is required as a cofactor.

The protein localises to the cytoplasm. It is found in the secreted. It localises to the cell surface. It carries out the reaction (2R)-2-phosphoglycerate = phosphoenolpyruvate + H2O. The protein operates within carbohydrate degradation; glycolysis; pyruvate from D-glyceraldehyde 3-phosphate: step 4/5. Its function is as follows. Catalyzes the reversible conversion of 2-phosphoglycerate (2-PG) into phosphoenolpyruvate (PEP). It is essential for the degradation of carbohydrates via glycolysis. The polypeptide is Enolase (Streptococcus pneumoniae serotype 19F (strain G54)).